Reading from the N-terminus, the 110-residue chain is Insulin growth factor-like family member 1 (110 aa).

The signal sequence occupies residues 1 to 24; the sequence is MAPRGCIVAVFAIFCISRLLCSHG. Residue Asn-71 is glycosylated (N-linked (GlcNAc...) asparagine).

This sequence belongs to the IGFL family. Homodimer; disulfide-linked. In terms of tissue distribution, detected in ovary and spinal cord.

The protein resides in the secreted. Probable ligand of the IGFLR1 cell membrane receptor. The sequence is that of Insulin growth factor-like family member 1 (IGFL1) from Homo sapiens (Human).